The following is a 104-amino-acid chain: UPF0473 protein SH1304 (104 aa).

It belongs to the UPF0473 family.

This chain is UPF0473 protein SH1304, found in Staphylococcus haemolyticus (strain JCSC1435).